The sequence spans 212 residues: Pyridoxine/pyridoxamine 5'-phosphate oxidase (212 aa).

Substrate is bound by residues 7–10 and Lys66; that span reads RREY. FMN is bound by residues 61–66, 76–77, Lys83, and Gln105; these read RIVLLK and YT. Substrate-binding residues include Tyr123, Arg127, and Ser131. FMN-binding positions include 140 to 141 and Trp185; that span reads QS. 191-193 contacts substrate; sequence RLH. Arg195 provides a ligand contact to FMN.

The protein belongs to the pyridoxamine 5'-phosphate oxidase family. Homodimer. Requires FMN as cofactor.

The enzyme catalyses pyridoxamine 5'-phosphate + O2 + H2O = pyridoxal 5'-phosphate + H2O2 + NH4(+). The catalysed reaction is pyridoxine 5'-phosphate + O2 = pyridoxal 5'-phosphate + H2O2. It participates in cofactor metabolism; pyridoxal 5'-phosphate salvage; pyridoxal 5'-phosphate from pyridoxamine 5'-phosphate: step 1/1. It functions in the pathway cofactor metabolism; pyridoxal 5'-phosphate salvage; pyridoxal 5'-phosphate from pyridoxine 5'-phosphate: step 1/1. Functionally, catalyzes the oxidation of either pyridoxine 5'-phosphate (PNP) or pyridoxamine 5'-phosphate (PMP) into pyridoxal 5'-phosphate (PLP). This is Pyridoxine/pyridoxamine 5'-phosphate oxidase from Idiomarina loihiensis (strain ATCC BAA-735 / DSM 15497 / L2-TR).